The following is a 357-amino-acid chain: Heme A synthase (357 aa).

5 consecutive transmembrane segments (helical) span residues 24–44 (LVRY…MVGG), 110–130 (MLAR…WVTG), 140–160 (MLGL…MVAS), 175–195 (IHLT…RGLV), and 209–229 (FAGW…LVAG). His272 contributes to the heme binding site. The next 3 helical transmembrane spans lie at 274–294 (MFAY…WKQV), 303–323 (TIVL…TLLM), and 325–345 (VPLH…AFAV). His333 lines the heme pocket.

Belongs to the COX15/CtaA family. Type 2 subfamily. In terms of assembly, interacts with CtaB. It depends on heme b as a cofactor.

It is found in the cell membrane. The catalysed reaction is Fe(II)-heme o + 2 A + H2O = Fe(II)-heme a + 2 AH2. It participates in porphyrin-containing compound metabolism; heme A biosynthesis; heme A from heme O: step 1/1. In terms of biological role, catalyzes the conversion of heme O to heme A by two successive hydroxylations of the methyl group at C8. The first hydroxylation forms heme I, the second hydroxylation results in an unstable dihydroxymethyl group, which spontaneously dehydrates, resulting in the formyl group of heme A. This is Heme A synthase from Brucella anthropi (strain ATCC 49188 / DSM 6882 / CCUG 24695 / JCM 21032 / LMG 3331 / NBRC 15819 / NCTC 12168 / Alc 37) (Ochrobactrum anthropi).